We begin with the raw amino-acid sequence, 474 residues long: Glycogen synthase (474 aa).

Lys15 is a binding site for ADP-alpha-D-glucose.

The protein belongs to the glycosyltransferase 1 family. Bacterial/plant glycogen synthase subfamily.

It catalyses the reaction [(1-&gt;4)-alpha-D-glucosyl](n) + ADP-alpha-D-glucose = [(1-&gt;4)-alpha-D-glucosyl](n+1) + ADP + H(+). It participates in glycan biosynthesis; glycogen biosynthesis. In terms of biological role, synthesizes alpha-1,4-glucan chains using ADP-glucose. The chain is Glycogen synthase from Finegoldia magna (strain ATCC 29328 / DSM 20472 / WAL 2508) (Peptostreptococcus magnus).